We begin with the raw amino-acid sequence, 382 residues long: L-lysine 4-hydroxylase (382 aa).

Residues His182, Glu184, and His318 each contribute to the Fe cation site.

Belongs to the clavaminate synthase family. Fe(2+) serves as cofactor.

The enzyme catalyses L-lysine + 2-oxoglutarate + O2 = (4R)-4-hydroxy-L-lysine + succinate + CO2. In terms of biological role, alpha-ketoglutarate-dependent dioxygenase that in vitro catalyzes the regio- and stereoselective hydroxylation of L-lysine, leading to (4R)-4-hydroxy-L-lysine. Cannot use D-lysine or L-ornithine as substrate. This Chitinophaga pinensis (strain ATCC 43595 / DSM 2588 / LMG 13176 / NBRC 15968 / NCIMB 11800 / UQM 2034) protein is L-lysine 4-hydroxylase.